The chain runs to 1522 residues: Paired amphipathic helix protein pst1 (1522 aa).

Residues 139-174 (TILSSTDSNIPRPGTVKSSASPFVPNQNPSAPPPPP) form a disordered region. Positions 178–248 (RQLNVTDALS…QGFNTFLPPG (71 aa)) constitute a PAH 1 domain. The segment at 307–339 (QSSASHPVLQPPAPSTLQFNPSPSPAAPSYPPV) is disordered. Positions 328–337 (SPSPAAPSYP) are enriched in pro residues. The 71-residue stretch at 345 to 415 (QAADLDQAIN…EEFKRFLPDV (71 aa)) folds into the PAH 2 domain. Disordered stretches follow at residues 422–504 (ETQD…AFNV), 928–968 (AREN…DESS), and 1343–1522 (SGKA…KDDL). The span at 426-441 (KSTVVPQESATATPKR) shows a compositional bias: polar residues. At Ser442 the chain carries Phosphoserine. The segment covering 442 to 468 (SPSATPTSALPPIGKFAPPTTAKAQPA) has biased composition (low complexity). Phosphothreonine is present on Thr446. The PAH 3 domain occupies 504-576 (VPIAQNKNPS…NWLKDLVKYN (73 aa)). Residues 928-960 (ARENRSSVKEDYVSESTERTPDASEIDEHISEH) show a composition bias toward basic and acidic residues. The segment covering 1385-1398 (GKSSVTRGNKTNLK) has biased composition (polar residues). The segment covering 1403-1432 (RNNDDSSNKINLSEKEKEKESIEDEEKNRE) has biased composition (basic and acidic residues). A Phosphoserine modification is found at Ser1443. Basic and acidic residues predominate over residues 1461–1474 (TSSHRPERSSEKKS). A compositionally biased stretch (polar residues) spans 1478 to 1487 (VFTSVKQTAE). The segment covering 1488–1522 (NDADNEDDKTDMDDQTEETLDADNTMEEEPSKDDL) has biased composition (acidic residues).

It is found in the nucleus. Its function is as follows. Has a role in modulating the nuclear import of TF1 virus-like particles. Essential for viability. The chain is Paired amphipathic helix protein pst1 (pst1) from Schizosaccharomyces pombe (strain 972 / ATCC 24843) (Fission yeast).